A 359-amino-acid chain; its full sequence is 3-dehydroquinate synthase (359 aa).

Residues Asp-71 to Lys-76, Gly-104 to Asp-108, Thr-128 to Thr-129, Lys-141, Lys-150, and Thr-168 to Thr-171 contribute to the NAD(+) site. The Zn(2+) site is built by Glu-183, His-247, and His-264.

The protein belongs to the sugar phosphate cyclases superfamily. Dehydroquinate synthase family. Requires Co(2+) as cofactor. It depends on Zn(2+) as a cofactor. NAD(+) is required as a cofactor.

It localises to the cytoplasm. The catalysed reaction is 7-phospho-2-dehydro-3-deoxy-D-arabino-heptonate = 3-dehydroquinate + phosphate. It participates in metabolic intermediate biosynthesis; chorismate biosynthesis; chorismate from D-erythrose 4-phosphate and phosphoenolpyruvate: step 2/7. Catalyzes the conversion of 3-deoxy-D-arabino-heptulosonate 7-phosphate (DAHP) to dehydroquinate (DHQ). The protein is 3-dehydroquinate synthase of Coxiella burnetii (strain Dugway 5J108-111).